Consider the following 171-residue polypeptide: Peptide deformylase (171 aa).

The Fe cation site is built by Cys-91 and His-133. Glu-134 is an active-site residue. His-137 serves as a coordination point for Fe cation.

Belongs to the polypeptide deformylase family. The cofactor is Fe(2+).

The catalysed reaction is N-terminal N-formyl-L-methionyl-[peptide] + H2O = N-terminal L-methionyl-[peptide] + formate. In terms of biological role, removes the formyl group from the N-terminal Met of newly synthesized proteins. Requires at least a dipeptide for an efficient rate of reaction. N-terminal L-methionine is a prerequisite for activity but the enzyme has broad specificity at other positions. The protein is Peptide deformylase of Sodalis glossinidius (strain morsitans).